The primary structure comprises 219 residues: Phosphoribosylformylglycinamidine synthase subunit PurQ (219 aa).

The Glutamine amidotransferase type-1 domain occupies Lys-2 to Ser-219. The Nucleophile role is filled by Cys-86. Active-site residues include His-195 and Glu-197.

As to quaternary structure, part of the FGAM synthase complex composed of 1 PurL, 1 PurQ and 2 PurS subunits.

The protein localises to the cytoplasm. It catalyses the reaction N(2)-formyl-N(1)-(5-phospho-beta-D-ribosyl)glycinamide + L-glutamine + ATP + H2O = 2-formamido-N(1)-(5-O-phospho-beta-D-ribosyl)acetamidine + L-glutamate + ADP + phosphate + H(+). It carries out the reaction L-glutamine + H2O = L-glutamate + NH4(+). Its pathway is purine metabolism; IMP biosynthesis via de novo pathway; 5-amino-1-(5-phospho-D-ribosyl)imidazole from N(2)-formyl-N(1)-(5-phospho-D-ribosyl)glycinamide: step 1/2. Part of the phosphoribosylformylglycinamidine synthase complex involved in the purines biosynthetic pathway. Catalyzes the ATP-dependent conversion of formylglycinamide ribonucleotide (FGAR) and glutamine to yield formylglycinamidine ribonucleotide (FGAM) and glutamate. The FGAM synthase complex is composed of three subunits. PurQ produces an ammonia molecule by converting glutamine to glutamate. PurL transfers the ammonia molecule to FGAR to form FGAM in an ATP-dependent manner. PurS interacts with PurQ and PurL and is thought to assist in the transfer of the ammonia molecule from PurQ to PurL. This is Phosphoribosylformylglycinamidine synthase subunit PurQ from Leptospira interrogans serogroup Icterohaemorrhagiae serovar copenhageni (strain Fiocruz L1-130).